The chain runs to 781 residues: Chloride channel protein CLC-f (781 aa).

2 disordered regions span residues 1 to 41 (MSSG…QSPA) and 79 to 98 (RERH…EEDG). A compositionally biased stretch (basic and acidic residues) spans 10-20 (NEDRHLLRSTD). 12 helical membrane passes run 129–149 (WALL…VAGF), 184–204 (ILLI…LLEI), 221–241 (FLAG…LGTG), 250–270 (SVDI…NNRE), 279–299 (GAAS…FFAI), 314–334 (FTTA…NALL), 350–370 (AAEL…SVVF), 388–408 (FGLP…IIAL), 433–453 (APGI…TALC), 457–477 (GLVG…GAVF), 502–522 (ALVG…TSVL), and 523–543 (LLFE…AVGL). Positions 553–584 (QGKESDSSEGRSTGRGYSSLSPSERKTEGVWR) are disordered. The span at 575–584 (SERKTEGVWR) shows a compositional bias: basic and acidic residues. CBS domains are found at residues 621–677 (MSKN…NAST) and 699–763 (QERG…EMSR). A helical transmembrane segment spans residues 726 to 746 (QLPVVKRGEVIHKGKRRKLLG).

The protein belongs to the chloride channel (TC 2.A.49) family. As to quaternary structure, homodimer.

It is found in the membrane. Functionally, voltage-gated chloride channel. The protein is Chloride channel protein CLC-f (CLC-F) of Arabidopsis thaliana (Mouse-ear cress).